The sequence spans 535 residues: MTKYIFVTGGVVSSLGKGITAASLGRLLKNRGLNVTIQKFDPYINVDPGTMSPYQHGEVFVTDDGAETDLDLGHYERFIDINLNKYSNVTTGKIYSSVLQKERRGEYLGGTVQVIPHITNEIKERVFRAGRETNADVVITEIGGTVGDIESLPFLEAIRQIKSDIGRDNVMYIHCTLIPYLKAAGEMKTKPTQHSVKELRSLGIQPNIIVVRTEMPVSQDMKDKLALFCDIDPKAVIEAADADTLYAVPLSLQEQNMDQIVCDHLKLDNAPADMTEWKALVDKVRNLSKKTRIALVGKYVELQDAYISVVEALRHAGYTFDTDVEVKWVNAEHVTAENVKELVGDTDGILVPGGFGDRGVEGKIVAIQYARENKVPFLGICLGMQLASIEFARNVLGLEGANSSEINPDTPYAIIDLLPEQKDVEDLGGTLRLGLYPCKLTPETNAYRAYNEPVVYERHRHRYEFNNQFRQEMENAGFIFSGTSPDGRLVEIVELQDHPWFVAAQFHPELVSRPNRPQPLFRDFVQASITNKESK.

The tract at residues 1 to 267 (MTKYIFVTGG…DQIVCDHLKL (267 aa)) is amidoligase domain. Ser13 lines the CTP pocket. Residue Ser13 coordinates UTP. Position 14-19 (14-19 (SLGKGI)) interacts with ATP. Tyr54 serves as a coordination point for L-glutamine. Residue Asp71 coordinates ATP. Mg(2+) contacts are provided by Asp71 and Glu141. CTP-binding positions include 148–150 (DIE), 188–193 (KTKPTQ), and Lys224. UTP contacts are provided by residues 188–193 (KTKPTQ) and Lys224. Residues 292 to 534 (RIALVGKYVE…VQASITNKES (243 aa)) form the Glutamine amidotransferase type-1 domain. Gly354 contacts L-glutamine. Catalysis depends on Cys381, which acts as the Nucleophile; for glutamine hydrolysis. Residues 382 to 385 (LGMQ), Glu405, and Arg462 each bind L-glutamine. Catalysis depends on residues His507 and Glu509.

This sequence belongs to the CTP synthase family. Homotetramer.

The catalysed reaction is UTP + L-glutamine + ATP + H2O = CTP + L-glutamate + ADP + phosphate + 2 H(+). It carries out the reaction L-glutamine + H2O = L-glutamate + NH4(+). It catalyses the reaction UTP + NH4(+) + ATP = CTP + ADP + phosphate + 2 H(+). The protein operates within pyrimidine metabolism; CTP biosynthesis via de novo pathway; CTP from UDP: step 2/2. Its activity is regulated as follows. Allosterically activated by GTP, when glutamine is the substrate; GTP has no effect on the reaction when ammonia is the substrate. The allosteric effector GTP functions by stabilizing the protein conformation that binds the tetrahedral intermediate(s) formed during glutamine hydrolysis. Inhibited by the product CTP, via allosteric rather than competitive inhibition. Catalyzes the ATP-dependent amination of UTP to CTP with either L-glutamine or ammonia as the source of nitrogen. Regulates intracellular CTP levels through interactions with the four ribonucleotide triphosphates. The protein is CTP synthase of Bacillus cytotoxicus (strain DSM 22905 / CIP 110041 / 391-98 / NVH 391-98).